A 385-amino-acid chain; its full sequence is Glucose-fructose oxidoreductase domain-containing protein 2 (385 aa).

The N-terminal stretch at 1 to 25 (MKLLPGVGVFGTGSSARVLVPLLRA) is a signal peptide.

This sequence belongs to the Gfo/Idh/MocA family.

It is found in the secreted. The protein resides in the extracellular space. The protein localises to the extracellular matrix. Its function is as follows. Promotes matrix assembly. The protein is Glucose-fructose oxidoreductase domain-containing protein 2 (Gfod2) of Mus musculus (Mouse).